Here is a 199-residue protein sequence, read N- to C-terminus: MFAYIKGTVEEKNNDSIIVEAGGIGYRIFTALSTINNMGQNGTTVKIYTHYYVREDIAVLYGFGTVEELTMFEMLLTVSGVGPKAAISMISTLSPSRFYLAVVSQDTKSLTKAPGIGMKMAQRIILDLKDKISKEQLTSSIPMTSPENNEVTGDSVLSEAVSALMVLGYGSAEASSTISGIYEKGISVEELVKKALKSL.

Residues 1 to 64 (MFAYIKGTVE…EDIAVLYGFG (64 aa)) are domain I. A domain II region spans residues 65–143 (TVEELTMFEM…KEQLTSSIPM (79 aa)). A flexible linker region spans residues 144 to 151 (TSPENNEV). Residues 152 to 199 (TGDSVLSEAVSALMVLGYGSAEASSTISGIYEKGISVEELVKKALKSL) are domain III.

This sequence belongs to the RuvA family. Homotetramer. Forms an RuvA(8)-RuvB(12)-Holliday junction (HJ) complex. HJ DNA is sandwiched between 2 RuvA tetramers; dsDNA enters through RuvA and exits via RuvB. An RuvB hexamer assembles on each DNA strand where it exits the tetramer. Each RuvB hexamer is contacted by two RuvA subunits (via domain III) on 2 adjacent RuvB subunits; this complex drives branch migration. In the full resolvosome a probable DNA-RuvA(4)-RuvB(12)-RuvC(2) complex forms which resolves the HJ.

Its subcellular location is the cytoplasm. The RuvA-RuvB-RuvC complex processes Holliday junction (HJ) DNA during genetic recombination and DNA repair, while the RuvA-RuvB complex plays an important role in the rescue of blocked DNA replication forks via replication fork reversal (RFR). RuvA specifically binds to HJ cruciform DNA, conferring on it an open structure. The RuvB hexamer acts as an ATP-dependent pump, pulling dsDNA into and through the RuvAB complex. HJ branch migration allows RuvC to scan DNA until it finds its consensus sequence, where it cleaves and resolves the cruciform DNA. In Ruminiclostridium cellulolyticum (strain ATCC 35319 / DSM 5812 / JCM 6584 / H10) (Clostridium cellulolyticum), this protein is Holliday junction branch migration complex subunit RuvA.